Here is a 973-residue protein sequence, read N- to C-terminus: Piwi-like protein 2 (973 aa).

The disordered stretch occupies residues 28–65 (WPQASKPLDPALGRGAPAGRGHVFGKPEEPSTQRGPAQ). Residues 34-48 (PLDPALGRGAPAGRG) are compositionally biased toward low complexity. Arginine 47 is modified (symmetric dimethylarginine). 2 positions are modified to omega-N-methylarginine; by PRMT5; alternate: arginine 76 and arginine 97. Arginine 76 carries the post-translational modification Symmetric dimethylarginine; by PRMT5; alternate. Arginine 97 carries the symmetric dimethylarginine; alternate modification. The residue at position 102 (arginine 102) is a Symmetric dimethylarginine; by PRMT5; alternate. At arginine 102 the chain carries Omega-N-methylarginine; alternate. 2 positions are modified to symmetric dimethylarginine: arginine 146 and arginine 158. The interval 162-199 (GISREVDKPPCTFSTPSRGPPQLSSPPALPQSPLHSPD) is disordered. At arginine 165 the chain carries Symmetric dimethylarginine; by PRMT5. The PAZ domain maps to 389-502 (CVLDVMHAIY…LLPELSFMTG (114 aa)). Arginine 551 is subject to Symmetric dimethylarginine; by PRMT5. One can recognise a Piwi domain in the interval 668-959 (MVVCIIMGPR…LAFLSGHILH (292 aa)). Active-site residues include aspartate 745, glutamate 783, aspartate 815, and histidine 948.

It belongs to the argonaute family. Piwi subfamily. In terms of assembly, interacts with DDX4, MAEL, EIF3A, EIF4E, EIF4G, PRMT5 and WDR77. Associates with EIF4E- and EIF4G-containing m7G cap-binding complexes. Interacts (when methylated on arginine residues) with TDRD1 and TDRKH/TDRD2. Interacts with TDRD12. Component of the PET complex, at least composed of EXD1, PIWIL2, TDRD12 and piRNAs. Interacts with MOV10L1. Interacts with GPAT2. Interacts with TEX19. Interacts with GSK3B. Interacts (via PIWI domain) with BMAL1 and CLOCK. Interacts with TEX15. It depends on Mg(2+) as a cofactor. Post-translationally, arginine methylation by PRMT5 is required for the interaction with Tudor domain-containing protein TDRD1 and subsequent localization to the meiotic nuage, also named P granule. As to expression, expressed in adult testis and in most tumors.

The protein localises to the cytoplasm. Endoribonuclease that plays a central role during spermatogenesis by repressing transposable elements and preventing their mobilization, which is essential for the germline integrity. Plays an essential role in meiotic differentiation of spermatocytes, germ cell differentiation and in self-renewal of spermatogonial stem cells. Acts via the piRNA metabolic process, which mediates the repression of transposable elements during meiosis by forming complexes composed of piRNAs and Piwi proteins and govern the methylation and subsequent repression of transposons. During piRNA biosynthesis, plays a key role in the piRNA amplification loop, also named ping-pong amplification cycle, by acting as a 'slicer-competent' piRNA endoribonuclease that cleaves primary piRNAs, which are then loaded onto 'slicer-incompetent' PIWIL4. PIWIL2 slicing produces a pre-miRNA intermediate, which is then processed in mature piRNAs, and as well as a 16 nucleotide by-product that is degraded. Required for PIWIL4/MIWI2 nuclear localization and association with secondary piRNAs antisense. Besides their function in transposable elements repression, piRNAs are probably involved in other processes during meiosis such as translation regulation. Indirectly modulates expression of genes such as PDGFRB, SLC2A1, ITGA6, GJA7, THY1, CD9 and STRA8. When overexpressed, acts as an oncogene by inhibition of apoptosis and promotion of proliferation in tumors. Represses circadian rhythms by promoting the stability and activity of core clock components BMAL1 and CLOCK by inhibiting GSK3B-mediated phosphorylation and ubiquitination-dependent degradation of these proteins. In Homo sapiens (Human), this protein is Piwi-like protein 2 (PIWIL2).